The sequence spans 815 residues: Subtilisin-like protease SBT2.5 (815 aa).

A signal peptide spans 1–19 (MDIGLRIFVVFVLLVAVTA). The Inhibitor I9 domain maps to 21 to 124 (VYIVTMEGDP…RSVDKDWKVR (104 aa)). The 552-residue stretch at 120 to 671 (DWKVRRLTTH…SGHVNPSAAL (552 aa)) folds into the Peptidase S8 domain. Residues D160 and H234 each act as charge relay system in the active site. The PA domain occupies 397–501 (TLVSANDVLL…VSKSMDLIDY (105 aa)). 2 N-linked (GlcNAc...) asparagine glycosylation sites follow: N503 and N577. Catalysis depends on S596, which acts as the Charge relay system. An N-linked (GlcNAc...) asparagine glycan is attached at N701.

The protein belongs to the peptidase S8 family. Expressed in roots, leaves and flowers of mature plants.

The sequence is that of Subtilisin-like protease SBT2.5 from Arabidopsis thaliana (Mouse-ear cress).